The primary structure comprises 278 residues: NAD kinase (278 aa).

Residue Asp-56 is the Proton acceptor of the active site. Residues 56-57, 132-133, Arg-158, Asp-160, and 171-176 contribute to the NAD(+) site; these read DG, NE, and TAYNKS.

This sequence belongs to the NAD kinase family. A divalent metal cation is required as a cofactor.

Its subcellular location is the cytoplasm. It carries out the reaction NAD(+) + ATP = ADP + NADP(+) + H(+). Involved in the regulation of the intracellular balance of NAD and NADP, and is a key enzyme in the biosynthesis of NADP. Catalyzes specifically the phosphorylation on 2'-hydroxyl of the adenosine moiety of NAD to yield NADP. This is NAD kinase from Streptococcus agalactiae serotype III (strain NEM316).